The sequence spans 154 residues: 17.8 kDa class I heat shock protein (154 aa).

The sHSP domain occupies 40 to 154; that stretch reads ESSAFANTRI…PEVKSIEISG (115 aa).

It belongs to the small heat shock protein (HSP20) family. As to quaternary structure, forms oligomeric structures.

Its subcellular location is the cytoplasm. This is 17.8 kDa class I heat shock protein from Solanum lycopersicum (Tomato).